The sequence spans 127 residues: Ribosome-binding factor A (127 aa).

Belongs to the RbfA family. In terms of assembly, monomer. Binds 30S ribosomal subunits, but not 50S ribosomal subunits or 70S ribosomes.

The protein localises to the cytoplasm. In terms of biological role, one of several proteins that assist in the late maturation steps of the functional core of the 30S ribosomal subunit. Associates with free 30S ribosomal subunits (but not with 30S subunits that are part of 70S ribosomes or polysomes). Required for efficient processing of 16S rRNA. May interact with the 5'-terminal helix region of 16S rRNA. This is Ribosome-binding factor A from Chloroflexus aggregans (strain MD-66 / DSM 9485).